The chain runs to 457 residues: Acetylcholine receptor subunit alpha-1-B (457 aa).

The signal sequence occupies residues 1-20; that stretch reads MDYTASCLIFLFIAAGTVFG. The Extracellular portion of the chain corresponds to 21-230; it reads TDHETRLIGD…ITYHFVLQRL (210 aa). Cystine bridges form between C148–C162 and C212–C213. The N-linked (GlcNAc...) asparagine glycan is linked to N161. 3 helical membrane-spanning segments follow: residues 231-255, 263-281, and 297-316; these read PLYF…VFYL, MTLS…LVIV, and YMLF…VIVI. At 317-428 the chain is on the cytoplasmic side; sequence NTHHRSPSTH…WKFVAMVLDH (112 aa). A helical membrane pass occupies residues 429–447; it reads ILLAVFMTVCVIGTLAVFA.

Belongs to the ligand-gated ion channel (TC 1.A.9) family. Acetylcholine receptor (TC 1.A.9.1) subfamily. Alpha-1/CHRNA1 sub-subfamily. In terms of assembly, one of the alpha chains that assemble within the acetylcholine receptor, a pentamer of two alpha chains, a beta, a delta, and a gamma or epsilon chains.

It localises to the postsynaptic cell membrane. The protein resides in the cell membrane. It carries out the reaction K(+)(in) = K(+)(out). The catalysed reaction is Na(+)(in) = Na(+)(out). Upon acetylcholine binding, the AChR responds by an extensive change in conformation that affects all subunits and leads to opening of an ion-conducting channel across the plasma membrane. This is Acetylcholine receptor subunit alpha-1-B (chrna1-b) from Xenopus laevis (African clawed frog).